The primary structure comprises 430 residues: Trigger factor (430 aa).

One can recognise a PPIase FKBP-type domain in the interval 157–242; the sequence is GDLVALETWS…AVEVSEPVLP (86 aa).

Belongs to the FKBP-type PPIase family. Tig subfamily.

The protein resides in the cytoplasm. It catalyses the reaction [protein]-peptidylproline (omega=180) = [protein]-peptidylproline (omega=0). Functionally, involved in protein export. Acts as a chaperone by maintaining the newly synthesized protein in an open conformation. Functions as a peptidyl-prolyl cis-trans isomerase. In Xanthomonas oryzae pv. oryzae (strain PXO99A), this protein is Trigger factor.